The sequence spans 322 residues: Ribosomal RNA small subunit methyltransferase H (322 aa).

S-adenosyl-L-methionine-binding positions include 34-36, D59, F86, D112, and Q119; that span reads GGH.

This sequence belongs to the methyltransferase superfamily. RsmH family.

Its subcellular location is the cytoplasm. It carries out the reaction cytidine(1402) in 16S rRNA + S-adenosyl-L-methionine = N(4)-methylcytidine(1402) in 16S rRNA + S-adenosyl-L-homocysteine + H(+). Its function is as follows. Specifically methylates the N4 position of cytidine in position 1402 (C1402) of 16S rRNA. The polypeptide is Ribosomal RNA small subunit methyltransferase H (Chlorobium limicola (strain DSM 245 / NBRC 103803 / 6330)).